Consider the following 775-residue polypeptide: WD repeat-containing protein pop1 (775 aa).

Residues 298-345 (KNFLTGFPAEITNLVLTHLDAPSLCAVSQVSHHWYKLVSSNEELWKSL) form the F-box domain. WD repeat units lie at residues 444–472 (EHEGDVWTFEYVGDTLVTGSTDRTVRVWD), 484–538 (GHTS…RLWS), 575–603 (GHTDSVREVACLGDLIVSASYDGTLRVWK), 615–645 (GHVGRVYSVTINPSRQQCISAGTDAKIRIWN), and 657–687 (GHSNLVSQVTFNQNILVSASAPPDTSLRVWD).

In terms of assembly, homodimer and heterodimer with pop2. Binds to cdc18, phosphorylated cig2, cul1, pip1 and skp1.

It is found in the nucleus. Functionally, involved in maintenance of ploidy through proteasome dependent degradation of CDK inhibitor rum1 and S-phase initiator cdc18. Functions as a recognition factor for rum1 and cdc18, which are subsequently ubiquitinated and targeted to the 26S proteasome for degradation. Together with pop2, required for cig2 instability during G2 and M phase and cig2 degradation in exponentially growing cells. Regulates cell-cycle progression under starvation through the rum1 protein. This Schizosaccharomyces pombe (strain 972 / ATCC 24843) (Fission yeast) protein is WD repeat-containing protein pop1 (pop1).